Reading from the N-terminus, the 602-residue chain is Elongation factor 4 (602 aa).

A tr-type G domain is found at 6-188 (DHIRNFSIVA…AIVNKLPAPK (183 aa)). GTP-binding positions include 18-23 (DHGKST) and 135-138 (NKID).

Belongs to the TRAFAC class translation factor GTPase superfamily. Classic translation factor GTPase family. LepA subfamily.

It localises to the cell inner membrane. The enzyme catalyses GTP + H2O = GDP + phosphate + H(+). Functionally, required for accurate and efficient protein synthesis under certain stress conditions. May act as a fidelity factor of the translation reaction, by catalyzing a one-codon backward translocation of tRNAs on improperly translocated ribosomes. Back-translocation proceeds from a post-translocation (POST) complex to a pre-translocation (PRE) complex, thus giving elongation factor G a second chance to translocate the tRNAs correctly. Binds to ribosomes in a GTP-dependent manner. This chain is Elongation factor 4, found in Brucella suis (strain ATCC 23445 / NCTC 10510).